Reading from the N-terminus, the 381-residue chain is Alkanesulfonate monooxygenase (381 aa).

This sequence belongs to the SsuD family. In terms of assembly, homotetramer.

The catalysed reaction is an alkanesulfonate + FMNH2 + O2 = an aldehyde + FMN + sulfite + H2O + 2 H(+). Its function is as follows. Catalyzes the desulfonation of aliphatic sulfonates. This is Alkanesulfonate monooxygenase from Escherichia coli O8 (strain IAI1).